The following is a 739-amino-acid chain: Phosphoribosylformylglycinamidine synthase subunit PurL (739 aa).

His-54 is a catalytic residue. ATP contacts are provided by Tyr-57 and Lys-96. Residue Glu-98 coordinates Mg(2+). Substrate-binding positions include 99 to 102 and Arg-121; that span reads SHNH. Residue His-100 is the Proton acceptor of the active site. Asp-122 serves as a coordination point for Mg(2+). Substrate is bound at residue Gln-245. Mg(2+) is bound at residue Asp-273. Residue 317–319 participates in substrate binding; that stretch reads ESQ. The ATP site is built by Asp-500 and Gly-537. Asn-538 is a binding site for Mg(2+). Residue Ser-540 participates in substrate binding.

Belongs to the FGAMS family. As to quaternary structure, monomer. Part of the FGAM synthase complex composed of 1 PurL, 1 PurQ and 2 PurS subunits.

Its subcellular location is the cytoplasm. It catalyses the reaction N(2)-formyl-N(1)-(5-phospho-beta-D-ribosyl)glycinamide + L-glutamine + ATP + H2O = 2-formamido-N(1)-(5-O-phospho-beta-D-ribosyl)acetamidine + L-glutamate + ADP + phosphate + H(+). It functions in the pathway purine metabolism; IMP biosynthesis via de novo pathway; 5-amino-1-(5-phospho-D-ribosyl)imidazole from N(2)-formyl-N(1)-(5-phospho-D-ribosyl)glycinamide: step 1/2. Functionally, part of the phosphoribosylformylglycinamidine synthase complex involved in the purines biosynthetic pathway. Catalyzes the ATP-dependent conversion of formylglycinamide ribonucleotide (FGAR) and glutamine to yield formylglycinamidine ribonucleotide (FGAM) and glutamate. The FGAM synthase complex is composed of three subunits. PurQ produces an ammonia molecule by converting glutamine to glutamate. PurL transfers the ammonia molecule to FGAR to form FGAM in an ATP-dependent manner. PurS interacts with PurQ and PurL and is thought to assist in the transfer of the ammonia molecule from PurQ to PurL. The protein is Phosphoribosylformylglycinamidine synthase subunit PurL of Bacillus cereus (strain ATCC 10987 / NRS 248).